We begin with the raw amino-acid sequence, 627 residues long: (-)-alpha-terpineol synthase, chloroplastic (627 aa).

The transit peptide at 1 to 52 (MDLISVLPSASKSCVCLHKPLSSSTHKLKPFCKTIRILVMPRRWEFARPSMS) directs the protein to the chloroplast. Asp-378, Asp-382, and Asp-530 together coordinate Mg(2+). The DDXXD motif motif lies at 378-382 (DDMYD).

The protein belongs to the terpene synthase family. Tpsd subfamily. It depends on Mg(2+) as a cofactor. Requires Mn(2+) as cofactor.

It is found in the plastid. The protein localises to the chloroplast. It catalyses the reaction (2E)-geranyl diphosphate + H2O = (S)-alpha-terpineol + diphosphate. The protein operates within terpene metabolism; oleoresin biosynthesis. Its function is as follows. Involved in defensive oleoresin formation in conifers in response to insect attack or other injury. Involved in monoterpene (C10) olefins biosynthesis. Produces 57.3% alpha-terpineol (15.1% (+)/84.9% (-)), 27.6% limonene (25.2% (+)/74.8% (-)), 8% terpinolene, 4.7% beta-pinene (14.8% (+)/85.2% (-)), 1.3% alpha-pinene (100% (+)) and 1.1% myrcene. This is (-)-alpha-terpineol synthase, chloroplastic (PT10) from Pinus taeda (Loblolly pine).